Here is a 122-residue protein sequence, read N- to C-terminus: Large ribosomal subunit protein bL12 (122 aa).

This sequence belongs to the bacterial ribosomal protein bL12 family. As to quaternary structure, homodimer. Part of the ribosomal stalk of the 50S ribosomal subunit. Forms a multimeric L10(L12)X complex, where L10 forms an elongated spine to which 2 to 4 L12 dimers bind in a sequential fashion. Binds GTP-bound translation factors.

In terms of biological role, forms part of the ribosomal stalk which helps the ribosome interact with GTP-bound translation factors. Is thus essential for accurate translation. The protein is Large ribosomal subunit protein bL12 of Stutzerimonas stutzeri (strain A1501) (Pseudomonas stutzeri).